A 403-amino-acid polypeptide reads, in one-letter code: Protein-glutamate methylesterase/protein-glutamine glutaminase (403 aa).

Residues 8 to 126 (AVLIVDDSAL…SAHLRTVSRK (119 aa)) form the Response regulatory domain. Asp59 bears the 4-aspartylphosphate mark. The CheB-type methylesterase domain occupies 204–393 (PLRESGALQI…VSLDDMAATI (190 aa)). Catalysis depends on residues Ser219, His246, and Asp342.

Belongs to the CheB family. Post-translationally, phosphorylated by CheA. Phosphorylation of the N-terminal regulatory domain activates the methylesterase activity.

It localises to the cytoplasm. It catalyses the reaction [protein]-L-glutamate 5-O-methyl ester + H2O = L-glutamyl-[protein] + methanol + H(+). The catalysed reaction is L-glutaminyl-[protein] + H2O = L-glutamyl-[protein] + NH4(+). Its function is as follows. Involved in chemotaxis. Part of a chemotaxis signal transduction system that modulates chemotaxis in response to various stimuli. Catalyzes the demethylation of specific methylglutamate residues introduced into the chemoreceptors (methyl-accepting chemotaxis proteins or MCP) by CheR. Also mediates the irreversible deamidation of specific glutamine residues to glutamic acid. The chain is Protein-glutamate methylesterase/protein-glutamine glutaminase from Treponema pallidum (strain Nichols).